Reading from the N-terminus, the 438-residue chain is 23S rRNA (uracil(1939)-C(5))-methyltransferase RlmD (438 aa).

Residues 10–68 form the TRAM domain; that stretch reads RVTTRQTITVKVHDLDSFGQGVAHHNGKALFVQGALPDEVAEVSIIEDKRHFSRGVATR. [4Fe-4S] cluster contacts are provided by cysteine 81, cysteine 87, cysteine 90, and cysteine 168. 6 residues coordinate S-adenosyl-L-methionine: glutamine 271, phenylalanine 300, asparagine 305, glutamate 321, asparagine 348, and aspartate 369. The Nucleophile role is filled by cysteine 395.

It belongs to the class I-like SAM-binding methyltransferase superfamily. RNA M5U methyltransferase family. RlmD subfamily.

It catalyses the reaction uridine(1939) in 23S rRNA + S-adenosyl-L-methionine = 5-methyluridine(1939) in 23S rRNA + S-adenosyl-L-homocysteine + H(+). Catalyzes the formation of 5-methyl-uridine at position 1939 (m5U1939) in 23S rRNA. In Erwinia tasmaniensis (strain DSM 17950 / CFBP 7177 / CIP 109463 / NCPPB 4357 / Et1/99), this protein is 23S rRNA (uracil(1939)-C(5))-methyltransferase RlmD.